Here is a 1409-residue protein sequence, read N- to C-terminus: L-2-aminoadipate reductase large subunit (1409 aa).

The Carrier domain occupies 858–937 (QALSETEQTL…GFASEIDRLL (80 aa)). Position 896 is an O-(pantetheine 4'-phosphoryl)serine (S896).

It belongs to the ATP-dependent AMP-binding enzyme family. Heterodimer of an alpha and a beta subunit. The cofactor is pantetheine 4'-phosphate.

The enzyme catalyses (S)-2-amino-6-oxohexanoate + NADP(+) + H2O = L-2-aminoadipate + NADPH + 2 H(+). It carries out the reaction (S)-2-amino-6-oxohexanoate + NAD(+) + H2O = L-2-aminoadipate + NADH + 2 H(+). It catalyses the reaction (S)-2-amino-6-oxohexanoate + AMP + diphosphate + NADP(+) = L-2-aminoadipate + ATP + NADPH + H(+). It functions in the pathway amino-acid biosynthesis; L-lysine biosynthesis via AAA pathway; L-lysine from L-alpha-aminoadipate (fungal route): step 1/3. Catalyzes the activation of alpha-aminoadipate by ATP-dependent adenylation and the reduction of activated alpha-aminoadipate by NADPH. The activated alpha-aminoadipate is bound to the phosphopantheinyl group of the enzyme itself before it is reduced to (S)-2-amino-6-oxohexanoate. This chain is L-2-aminoadipate reductase large subunit (lys2), found in Penicillium chrysogenum (Penicillium notatum).